We begin with the raw amino-acid sequence, 65 residues long: Alpha-like toxin Bom4 (65 aa).

In terms of domain architecture, LCN-type CS-alpha/beta spans 2–64; that stretch reads RDAYIAQPEN…VPIRIPGKCH (63 aa). Intrachain disulfides connect C12–C63, C16–C36, C22–C46, and C26–C48.

Belongs to the long (4 C-C) scorpion toxin superfamily. Sodium channel inhibitor family. Alpha subfamily. Expressed by the venom gland.

The protein resides in the secreted. Its function is as follows. Alpha toxins bind voltage-independently at site-3 of sodium channels (Nav) and inhibit the inactivation of the activated channels, thereby blocking neuronal transmission. This alpha-like toxin is highly toxic to mice and insects. The chain is Alpha-like toxin Bom4 from Buthus occitanus mardochei (Moroccan scorpion).